The primary structure comprises 106 residues: uncharacterized protein (106 aa).

This is an uncharacterized protein from Rhodococcus erythropolis (Arthrobacter picolinophilus).